The following is a 668-amino-acid chain: MAAERSRSPVDSPVPASMFAPEPSSPGAARAAAAAARLHGGFDSDCSEDGEALNGEPELDLTSKLVLVSPTSEQYDSLLRQMWERMDEGCGETIYVIGQGSDGTEYGLSEADMEASYATVKSMAEQIEADVILLRERQEAGGRVRDYLVRKRVGDNDFLEVRVAVVGNVDAGKSTLLGVLTHGELDNGRGFARQKLFRHKHEIESGRTSSVGNDILGFDSEGNVVNKPDSHGGSLEWTKICEKSSKVITFIDLAGHEKYLKTTVFGMTGHLPDFCMLMVGSNAGIVGMTKEHLGLALALNVPVFVVVTKIDMCPANILQETLKLLQRLLKSPGCRKIPVLVQSKDDVIVTASNFSSERMCPIFQISNVTGENLDLLKMFLNLLSPRTSYREEEPAEFQIDDTYSVPGVGTVVSGTTLRGLIKLNDTLLLGPDPLGNFLSIAVKSIHRKRMPVKEVRGGQTASFALKKIKRSSIRKGMVMVSPRLNPQASWEFEAEILVLHHPTTISPRYQAMVHCGSIRQTATILSMDKDCLRTGDKATVHFRFIKTPEYLHIDQRLVFREGRTKAVGTITKLLQTTNNSPMNSKPQQIKMQSTKKGPLSKREEGGPCGVPAAGGPPTGDEASSLGTAQAASTSGLQPQPKPSSGGRRRGGQRHKVKSGACVTPASGC.

Positions 1–32 (MAAERSRSPVDSPVPASMFAPEPSSPGAARAA) are disordered. A phosphoserine mark is found at Ser6, Ser8, Ser12, Ser24, Ser25, Ser44, Ser47, and Ser69. Positions 158 to 389 (FLEVRVAVVG…LNLLSPRTSY (232 aa)) constitute a tr-type G domain. The interval 167–174 (GNVDAGKS) is G1. GTP is bound at residue 167-174 (GNVDAGKS). The segment at 206–210 (GRTSS) is G2. Residues 252–255 (DLAG) are G3. Residues 252–256 (DLAGH) and 308–311 (TKID) contribute to the GTP site. The tract at residues 308–311 (TKID) is G4. A G5 region spans residues 366–368 (SNV). Residues 573–595 (LLQTTNNSPMNSKPQQIKMQSTK) are compositionally biased toward polar residues. Positions 573–668 (LLQTTNNSPM…GACVTPASGC (96 aa)) are disordered. Ser580 bears the Phosphoserine mark. Positions 609–619 (GVPAAGGPPTG) are enriched in low complexity. Residues 624–637 (SLGTAQAASTSGLQ) show a composition bias toward polar residues. Positions 646 to 657 (GRRRGGQRHKVK) are enriched in basic residues.

It belongs to the TRAFAC class translation factor GTPase superfamily. Classic translation factor GTPase family. GTPBP1 subfamily. As to quaternary structure, interacts with EXOSC2/RRP4, EXOSC3/RRP40, EXOSC5/RRP46, HNRNPD, HNRNPR and SYNCRIP. Identified in a complex with AANAT mRNA, but does not bind mRNA by itself. In terms of tissue distribution, detected in some neurons in the brain cortex. Detected in small arteries, dendritic cells and macrophages in the thymus. Detected in lung bronchi, in bronchial epithelial cells and in bronchial smooth muscle cells. Detected in smooth muscle cells in a broad range of organs (at protein level). Expressed in brain, thymus, lung, and kidney.

It localises to the cytoplasm. Functionally, promotes degradation of target mRNA species. Plays a role in the regulation of circadian mRNA stability. Binds GTP and has GTPase activity. This is GTP-binding protein 1 (Gtpbp1) from Mus musculus (Mouse).